The following is a 122-amino-acid chain: Small ribosomal subunit protein uS13 (122 aa).

Positions 99-122 (RGQRTHTNARTRKGPAKAIAGKKK) are disordered.

This sequence belongs to the universal ribosomal protein uS13 family. Part of the 30S ribosomal subunit. Forms a loose heterodimer with protein S19. Forms two bridges to the 50S subunit in the 70S ribosome.

Its function is as follows. Located at the top of the head of the 30S subunit, it contacts several helices of the 16S rRNA. In the 70S ribosome it contacts the 23S rRNA (bridge B1a) and protein L5 of the 50S subunit (bridge B1b), connecting the 2 subunits; these bridges are implicated in subunit movement. Contacts the tRNAs in the A and P-sites. The polypeptide is Small ribosomal subunit protein uS13 (Rhizobium etli (strain CIAT 652)).